We begin with the raw amino-acid sequence, 254 residues long: MALAVRVIPCLDVDNGRVVKGVNFENLRDAGDPVELAARYGQVGADELTFLDVSASKDGRGTMLDVVRRTADQVFIPLTVGGGVRSVDDVRELLRAGADKVSVNSSAIARPELLRELADVFGSQCIVLSVDARRAADFPSGFEVTTHGGTRSAGLDAVEWAKRGEELGVGEILLNSMDGDGTKAGFDIELIEAVRAAVSVPIIASGGAGKAEHFPPAVDAGADAVLAASIFHFGEVEISEVKEALAAAGKEVRQ.

Catalysis depends on residues D12 and D131.

The protein belongs to the HisA/HisF family. Heterodimer of HisH and HisF.

Its subcellular location is the cytoplasm. It carries out the reaction 5-[(5-phospho-1-deoxy-D-ribulos-1-ylimino)methylamino]-1-(5-phospho-beta-D-ribosyl)imidazole-4-carboxamide + L-glutamine = D-erythro-1-(imidazol-4-yl)glycerol 3-phosphate + 5-amino-1-(5-phospho-beta-D-ribosyl)imidazole-4-carboxamide + L-glutamate + H(+). It functions in the pathway amino-acid biosynthesis; L-histidine biosynthesis; L-histidine from 5-phospho-alpha-D-ribose 1-diphosphate: step 5/9. IGPS catalyzes the conversion of PRFAR and glutamine to IGP, AICAR and glutamate. The HisF subunit catalyzes the cyclization activity that produces IGP and AICAR from PRFAR using the ammonia provided by the HisH subunit. The chain is Imidazole glycerol phosphate synthase subunit HisF from Corynebacterium aurimucosum (strain ATCC 700975 / DSM 44827 / CIP 107346 / CN-1) (Corynebacterium nigricans).